Reading from the N-terminus, the 333-residue chain is MKVYYDQDADLNLLKDKTVAIIGYGSQGHAHAQNLRDSGVKVVVGQRPGGANYELAKEHGFNPVSAAEAAAQADLIMLLLPDEVQAAVYENDIKPNLAKGKALLFAHGFNIHFGQIQPPKDVDVFLIAPKGPGHLVRRTYTEGGGVPCLVAIEQDATGKALQMALAYAKGVGGARSGVIETTFREETETDLFGEQAVLCGGVSALIKAGFETLVEAGYQPEMAYFECLHEMKLIVDLMYEGGLSRMRYSISNTAEYGDYVTGPRLVTDEVKKEMKAVLKDIQSGVFARNFILEARAKYPMFLTTRRNESEHQIEKVGKELRSMMPWLKKDKKD.

One can recognise a KARI N-terminal Rossmann domain in the interval 1-181; sequence MKVYYDQDAD…GGARSGVIET (181 aa). NADP(+)-binding positions include 24-27, arginine 47, and 82-85; these read YGSQ and DEVQ. Histidine 107 is an active-site residue. NADP(+) is bound at residue glycine 133. A KARI C-terminal knotted domain is found at 182-327; that stretch reads TFREETETDL…KELRSMMPWL (146 aa). Mg(2+) is bound by residues aspartate 190, glutamate 194, glutamate 226, and glutamate 230. Serine 251 contacts substrate.

This sequence belongs to the ketol-acid reductoisomerase family. Requires Mg(2+) as cofactor.

It carries out the reaction (2R)-2,3-dihydroxy-3-methylbutanoate + NADP(+) = (2S)-2-acetolactate + NADPH + H(+). The catalysed reaction is (2R,3R)-2,3-dihydroxy-3-methylpentanoate + NADP(+) = (S)-2-ethyl-2-hydroxy-3-oxobutanoate + NADPH + H(+). Its pathway is amino-acid biosynthesis; L-isoleucine biosynthesis; L-isoleucine from 2-oxobutanoate: step 2/4. It functions in the pathway amino-acid biosynthesis; L-valine biosynthesis; L-valine from pyruvate: step 2/4. Its function is as follows. Involved in the biosynthesis of branched-chain amino acids (BCAA). Catalyzes an alkyl-migration followed by a ketol-acid reduction of (S)-2-acetolactate (S2AL) to yield (R)-2,3-dihydroxy-isovalerate. In the isomerase reaction, S2AL is rearranged via a Mg-dependent methyl migration to produce 3-hydroxy-3-methyl-2-ketobutyrate (HMKB). In the reductase reaction, this 2-ketoacid undergoes a metal-dependent reduction by NADPH to yield (R)-2,3-dihydroxy-isovalerate. This chain is Ketol-acid reductoisomerase (NADP(+)), found in Desulfovibrio desulfuricans (strain ATCC 27774 / DSM 6949 / MB).